The following is a 241-amino-acid chain: DNA repair protein RecO (241 aa).

Belongs to the RecO family.

Its function is as follows. Involved in DNA repair and RecF pathway recombination. This chain is DNA repair protein RecO, found in Ruegeria sp. (strain TM1040) (Silicibacter sp.).